The sequence spans 660 residues: Bifunctional polymyxin resistance protein ArnA (660 aa).

The segment at 1–304 is formyltransferase ArnAFT; that stretch reads MKAVIFAYHD…TLGLVAGARL (304 aa). The active-site Proton donor; for formyltransferase activity is H104. (6R)-10-formyltetrahydrofolate contacts are provided by residues R114 and 136-140; that span reads VKRAD. The tract at residues 314-660 is dehydrogenase ArnADH; that stretch reads RRIRVLILGV…RSVDVAERAS (347 aa). Residues D347 and 368–369 each bind NAD(+); that span reads DI. UDP-alpha-D-glucuronate-binding positions include A393, Y398, and 432-433; that span reads TS. E434 functions as the Proton acceptor; for decarboxylase activity in the catalytic mechanism. UDP-alpha-D-glucuronate contacts are provided by residues R460, N492, 526 to 535, and Y613; that span reads KLIDGGQQKR. R619 serves as the catalytic Proton donor; for decarboxylase activity.

In the N-terminal section; belongs to the Fmt family. UDP-L-Ara4N formyltransferase subfamily. The protein in the C-terminal section; belongs to the NAD(P)-dependent epimerase/dehydratase family. UDP-glucuronic acid decarboxylase subfamily. As to quaternary structure, homohexamer, formed by a dimer of trimers.

The catalysed reaction is UDP-alpha-D-glucuronate + NAD(+) = UDP-beta-L-threo-pentopyranos-4-ulose + CO2 + NADH. It carries out the reaction UDP-4-amino-4-deoxy-beta-L-arabinose + (6R)-10-formyltetrahydrofolate = UDP-4-deoxy-4-formamido-beta-L-arabinose + (6S)-5,6,7,8-tetrahydrofolate + H(+). Its pathway is nucleotide-sugar biosynthesis; UDP-4-deoxy-4-formamido-beta-L-arabinose biosynthesis; UDP-4-deoxy-4-formamido-beta-L-arabinose from UDP-alpha-D-glucuronate: step 1/3. It participates in nucleotide-sugar biosynthesis; UDP-4-deoxy-4-formamido-beta-L-arabinose biosynthesis; UDP-4-deoxy-4-formamido-beta-L-arabinose from UDP-alpha-D-glucuronate: step 3/3. The protein operates within bacterial outer membrane biogenesis; lipopolysaccharide biosynthesis. Its function is as follows. Bifunctional enzyme that catalyzes the oxidative decarboxylation of UDP-glucuronic acid (UDP-GlcUA) to UDP-4-keto-arabinose (UDP-Ara4O) and the addition of a formyl group to UDP-4-amino-4-deoxy-L-arabinose (UDP-L-Ara4N) to form UDP-L-4-formamido-arabinose (UDP-L-Ara4FN). The modified arabinose is attached to lipid A and is required for resistance to polymyxin and cationic antimicrobial peptides. The chain is Bifunctional polymyxin resistance protein ArnA from Salmonella paratyphi C (strain RKS4594).